The chain runs to 250 residues: Deoxynucleoside kinase (250 aa).

Position 27–35 (27–35) interacts with ATP; that stretch reads GNIGSGKTT. Substrate contacts are provided by glutamate 52, tyrosine 70, and glutamine 81. The Proton acceptor role is filled by glutamate 104. Substrate contacts are provided by arginine 105 and glutamate 172. Serine 236, serine 241, and serine 243 each carry phosphoserine.

Belongs to the DCK/DGK family. As to quaternary structure, monomer.

The enzyme catalyses a 2'-deoxyribonucleoside + ATP = a 2'-deoxyribonucleoside 5'-phosphate + ADP + H(+). Its activity is regulated as follows. Subject to feedback inhibition by dTTP. Its function is as follows. Deoxyribonucleoside kinase that has a broad specificity phosphorylating thymidine, 2'-deoxyriboadenosine, 2'-deoxyribocytidine and 2'-deoxyriboguanosine. Specificity is higher for pyrimidine nucleosides. Several anti-viral and anti-cancer nucleoside analogs are also efficiently phosphorylated. The polypeptide is Deoxynucleoside kinase (dnk) (Drosophila melanogaster (Fruit fly)).